Here is a 394-residue protein sequence, read N- to C-terminus: Elongation factor Tu (394 aa).

In terms of domain architecture, tr-type G spans 10–204 (KPHVNIGTIG…AVDSYIPQPV (195 aa)). The interval 19-26 (GHVDHGKT) is G1. 19 to 26 (GHVDHGKT) serves as a coordination point for GTP. Thr-26 lines the Mg(2+) pocket. A G2 region spans residues 60 to 64 (GITIS). Residues 81-84 (DCPG) are G3. Residues 81–85 (DCPGH) and 136–139 (NKVD) each bind GTP. The tract at residues 136-139 (NKVD) is G4. Positions 174 to 176 (SAL) are G5.

It belongs to the TRAFAC class translation factor GTPase superfamily. Classic translation factor GTPase family. EF-Tu/EF-1A subfamily. As to quaternary structure, monomer.

It localises to the cytoplasm. It catalyses the reaction GTP + H2O = GDP + phosphate + H(+). In terms of biological role, GTP hydrolase that promotes the GTP-dependent binding of aminoacyl-tRNA to the A-site of ribosomes during protein biosynthesis. The sequence is that of Elongation factor Tu from Rickettsia felis (strain ATCC VR-1525 / URRWXCal2) (Rickettsia azadi).